Here is a 401-residue protein sequence, read N- to C-terminus: Multidrug resistance protein MdtH (401 aa).

11 consecutive transmembrane segments (helical) span residues 13–33, 34–54, 78–95, 99–116, 139–159, 165–185, 214–234, 243–263, 289–309, 340–360, and 365–385; these read YFLL…FPLI, SIHF…ALGL, MIVT…FIAL, PWIL…GTLF, LLLM…SWLL, FVCW…ALFL, VLTL…FPII, AAVK…LYPI, FPVG…LFYL, LGLA…YDTG, and IPQL…YALH.

Belongs to the major facilitator superfamily. DHA1 family. MdtH (TC 2.A.1.2.21) subfamily.

It localises to the cell inner membrane. This chain is Multidrug resistance protein MdtH, found in Photorhabdus laumondii subsp. laumondii (strain DSM 15139 / CIP 105565 / TT01) (Photorhabdus luminescens subsp. laumondii).